Reading from the N-terminus, the 327-residue chain is Phenylalanine--tRNA ligase alpha subunit (327 aa).

Glu252 provides a ligand contact to Mg(2+).

It belongs to the class-II aminoacyl-tRNA synthetase family. Phe-tRNA synthetase alpha subunit type 1 subfamily. As to quaternary structure, tetramer of two alpha and two beta subunits. Mg(2+) is required as a cofactor.

It localises to the cytoplasm. It catalyses the reaction tRNA(Phe) + L-phenylalanine + ATP = L-phenylalanyl-tRNA(Phe) + AMP + diphosphate + H(+). This Shewanella amazonensis (strain ATCC BAA-1098 / SB2B) protein is Phenylalanine--tRNA ligase alpha subunit.